A 185-amino-acid chain; its full sequence is Ribosome-recycling factor (185 aa).

This sequence belongs to the RRF family.

It is found in the cytoplasm. In terms of biological role, responsible for the release of ribosomes from messenger RNA at the termination of protein biosynthesis. May increase the efficiency of translation by recycling ribosomes from one round of translation to another. The polypeptide is Ribosome-recycling factor (Streptomyces avermitilis (strain ATCC 31267 / DSM 46492 / JCM 5070 / NBRC 14893 / NCIMB 12804 / NRRL 8165 / MA-4680)).